The chain runs to 557 residues: Formate--tetrahydrofolate ligase (557 aa).

65–72 (TPAGEGKT) is a binding site for ATP.

Belongs to the formate--tetrahydrofolate ligase family.

It carries out the reaction (6S)-5,6,7,8-tetrahydrofolate + formate + ATP = (6R)-10-formyltetrahydrofolate + ADP + phosphate. Its pathway is one-carbon metabolism; tetrahydrofolate interconversion. The sequence is that of Formate--tetrahydrofolate ligase from Zymomonas mobilis subsp. mobilis (strain ATCC 31821 / ZM4 / CP4).